A 211-amino-acid chain; its full sequence is Degradation in the endoplasmic reticulum protein 1 (211 aa).

N-acetylmethionine is present on methionine 1. The Cytoplasmic segment spans residues 1-14 (MDAVILNLLGDIPL). Residues 15 to 32 (VTRLWTIGCLVLSGLTSL) form a helical membrane-spanning segment. Residues 33–67 (RIVDPGKVVYSYDLVFKKGQYGRLLYSIFDYGAFN) lie on the Lumenal side of the membrane. A helical membrane pass occupies residues 68-85 (WISMINIFVSANHLSTLE). Residues 86-92 (NSFNLRR) lie on the Cytoplasmic side of the membrane. A helical membrane pass occupies residues 93–109 (KFCWIIFLLLVILVKMT). Residues 110–117 (SIEQPAAS) are Lumenal-facing. The helical transmembrane segment at 118-133 (LGVLLHENLVYYELKK) threads the bilayer. The Cytoplasmic portion of the chain corresponds to 134-149 (NGNQMNVRFFGAIDVS). The helical transmembrane segment at 150-165 (PSIFPIYMNAVMYFVY) threads the bilayer. At 166–168 (KRS) the chain is on the lumenal side. A helical transmembrane segment spans residues 169–189 (WLEIAMNFMPGHVIYYMDDII). Residues 190-211 (GKIYGIDLCKSPYDWFRNTETP) are Cytoplasmic-facing.

The protein belongs to the derlin family. In terms of assembly, component of the HRD1 ubiquitin ligase complex which contains the E3 ligase HRD1, its cofactors HRD3, USA1 and DER1, substrate recruiting factor YOS9 and CDC48-binding protein UBX2. Within the complex, interacts with USA1 (via C-terminus). In ERAD-L, HRD3 and YOS9 jointly bind misfolded glycoproteins in the endoplasmic reticulum (ER) lumen. Movement of ERAD-L substrates through the ER membrane is facilitated by HRD1 and DER1 which have lateral gates facing each other and which distort the membrane region between the lateral gates, making it much thinner than a normal phospholipid bilayer. Substrates insert into the membrane as a hairpin loop with one strand interacting with DER1 and the other with HRD1. The HRD1 complex interacts with the heterotrimeric CDC48-NPL4-UFD1 ATPase complex which is recruited by UBX2 via its interaction with CDC48 and which moves ubiquitinated substrates to the cytosol for targeting to the proteasome. In terms of processing, N-terminally acetylated by acetyltransferase NatB which enhances DER1 stability and is required for ERAD-L function.

It localises to the endoplasmic reticulum membrane. Functionally, component of the endoplasmic reticulum-associated degradation (ERAD) pathway. Specifically required for the ERAD-L pathway which mediates the degradation of proteins with misfolded lumenal domains within the endoplasmic reticulum (ER). Facilitates retrotranslocation of misfolded proteins from the ER lumen through the ER membrane in conjunction with HRD1. Both proteins have lateral gates facing each other and distort the membrane region between the lateral gates, making it much thinner than a normal phospholipid bilayer. Substrates insert into the membrane as a hairpin loop with one strand interacting with DER1 and the other with HRD1. The protein is Degradation in the endoplasmic reticulum protein 1 (DER1) of Saccharomyces cerevisiae (strain ATCC 204508 / S288c) (Baker's yeast).